The chain runs to 547 residues: Apicoplast pyruvate carrier 1 (547 aa).

A disordered region spans residues 1–33 (MEPRAPPRLSVSSPRRESGATVPSHSPSTLLSC). Residues 1 to 45 (MEPRAPPRLSVSSPRRESGATVPSHSPSTLLSCASSETATEKRRR) are Cytoplasmic-facing. Residues 21-33 (TVPSHSPSTLLSC) show a composition bias toward polar residues. A run of 12 helical transmembrane segments spans residues 46-66 (WTGV…GTVY), 126-146 (AWVL…GGIA), 167-187 (VGMA…FGVI), 189-209 (GVGL…WFPE), 212-232 (GIVS…FSPL), 278-298 (LLAV…RVPA), 345-365 (ALVS…GLAI), 385-405 (ILTE…NAVG), 417-437 (GFQT…FFLP), 445-465 (LCYA…FSVF), 467-487 (SAVA…FIFG), and 515-535 (LMGL…ALSP).

This sequence belongs to the major facilitator superfamily. In terms of assembly, interacts with apicoplast pyruvate carrier 2.

Its subcellular location is the plastid. It localises to the apicoplast. It is found in the membrane. In terms of biological role, along with apicoplast pyruvate carrier 2, forms apicoplast pyruvate carrier (APC) complex, which transports pyruvate into the apicoplast and may also transport amino acids like methionine, serine, glycine and tryptophan with low efficiency. Required for maintaining pyruvate-dependent metabolic activities in the apicoplast, such as synthesis of fatty acids, isopentenyl pyrophosphate (IPP), dimethylallyl pyrophosphate (DMAPP) and methylerythritol 4-phosphate (MEP). Required for maintaining the integrity of the apicoplast. Required for normal parasite growth. This is Apicoplast pyruvate carrier 1 from Toxoplasma gondii.